Consider the following 189-residue polypeptide: Parkinson disease protein 7 homolog (189 aa).

A2 carries the N-acetylalanine; in Protein/nucleic acid deglycase DJ-1, N-terminally processed modification. Residues C46 and C53 are each lipidated (S-palmitoyl cysteine). Position 67 is a phosphotyrosine (Y67). The Nucleophile role is filled by C106. Cysteine sulfinic acid (-SO2H); alternate is present on C106. C106 carries the S-palmitoyl cysteine; alternate lipid modification. H126 is an active-site residue. K130 participates in a covalent cross-link: Glycyl lysine isopeptide (Lys-Gly) (interchain with G-Cter in SUMO). N6-acetyllysine is present on K148. K182 is modified (N6-succinyllysine).

Belongs to the peptidase C56 family. In terms of assembly, homodimer. Binds EFCAB6/DJBP and PIAS2. Part of a ternary complex containing PARK7, EFCAB6/DJBP and AR. Interacts (via N-terminus) with OTUD7B. Interacts with BBS1, HIPK1, CLCF1 and MTERF. Forms a complex with PINK1 and PRKN. Interacts (via C-terminus) with NCF1; the interaction is enhanced by LPS and modulates NCF1 phosphorylation and membrane translocation. Interacts with NENF. Deglycase activity does not require glutathione as a cofactor, however, glycated glutathione constitutes a PARK7 substrate. is required as a cofactor. In terms of processing, sumoylated on Lys-130 by PIAS2 or PIAS4; which is essential for cell-growth promoting activity and transforming activity. Post-translationally, undergoes cleavage of a C-terminal peptide and subsequent activation of protease activity in response to oxidative stress. In terms of tissue distribution, detected in liver, heart, spleen and testis (at protein level). Detected in liver, heart, spleen, kidney, epididymidis, vas deferens, sperm cells and testis.

The protein localises to the cell membrane. The protein resides in the cytoplasm. It localises to the nucleus. Its subcellular location is the membrane raft. It is found in the mitochondrion. The protein localises to the endoplasmic reticulum. It catalyses the reaction N(omega)-(1-hydroxy-2-oxopropyl)-L-arginyl-[protein] + H2O = lactate + L-arginyl-[protein] + H(+). It carries out the reaction N(6)-(1-hydroxy-2-oxopropyl)-L-lysyl-[protein] + H2O = lactate + L-lysyl-[protein] + H(+). The catalysed reaction is S-(1-hydroxy-2-oxopropyl)-L-cysteinyl-[protein] + H2O = lactate + L-cysteinyl-[protein] + H(+). The enzyme catalyses N(omega)-(1-hydroxy-2-oxoethyl)-L-arginyl-[protein] + H2O = L-arginyl-[protein] + glycolate + H(+). It catalyses the reaction N(6)-(1-hydroxy-2-oxoethyl)-L-lysyl-[protein] + H2O = glycolate + L-lysyl-[protein] + H(+). It carries out the reaction S-(1-hydroxy-2-oxoethyl)-L-cysteinyl-[protein] + H2O = glycolate + L-cysteinyl-[protein] + H(+). The catalysed reaction is N(2)-(1-hydroxy-2-oxopropyl)-dGTP + H2O = lactate + dGTP + H(+). The enzyme catalyses N(2)-(1-hydroxy-2-oxopropyl)-GTP + H2O = lactate + GTP + H(+). It catalyses the reaction N(2)-(1-hydroxy-2-oxopropyl)-GDP + H2O = lactate + GDP + H(+). It carries out the reaction N(2)-(1-hydroxy-2-oxopropyl)-GMP + H2O = lactate + GMP + H(+). The catalysed reaction is N(2)-(1-hydroxy-2-oxoethyl)-dGTP + H2O = dGTP + glycolate + H(+). The enzyme catalyses N(2)-(1-hydroxy-2-oxoethyl)-GTP + H2O = glycolate + GTP + H(+). It catalyses the reaction N(2)-(1-hydroxy-2-oxoethyl)-GDP + H2O = glycolate + GDP + H(+). It carries out the reaction N(2)-(1-hydroxy-2-oxoethyl)-GMP + H2O = glycolate + GMP + H(+). The catalysed reaction is an N(2)-(1-hydroxy-2-oxopropyl)-guanosine in RNA + H2O = a guanosine in RNA + lactate + H(+). The enzyme catalyses an N(2)-(1-hydroxy-2-oxopropyl)-2'-deoxyguanosine in DNA + H2O = a 2'-deoxyguanosine in DNA + lactate + H(+). It catalyses the reaction an N(2)-(1-hydroxy-2-oxoethyl)-guanosine in RNA + H2O = a guanosine in RNA + glycolate + H(+). It carries out the reaction an N(2)-(1-hydroxy-2-oxoethyl)-2'-deoxyguanosine in DNA + H2O = a 2'-deoxyguanosine in DNA + glycolate + H(+). Functionally, multifunctional protein with controversial molecular function which plays an important role in cell protection against oxidative stress and cell death acting as oxidative stress sensor and redox-sensitive chaperone and protease. It is involved in neuroprotective mechanisms like the stabilization of NFE2L2 and PINK1 proteins, male fertility as a positive regulator of androgen signaling pathway as well as cell growth and transformation through, for instance, the modulation of NF-kappa-B signaling pathway. Has been described as a protein and nucleotide deglycase that catalyzes the deglycation of the Maillard adducts formed between amino groups of proteins or nucleotides and reactive carbonyl groups of glyoxals. But this function is rebuted by other works. As a protein deglycase, repairs methylglyoxal- and glyoxal-glycated proteins, and releases repaired proteins and lactate or glycolate, respectively. Deglycates cysteine, arginine and lysine residues in proteins, and thus reactivates these proteins by reversing glycation by glyoxals. Acts on early glycation intermediates (hemithioacetals and aminocarbinols), preventing the formation of advanced glycation endproducts (AGE) that cause irreversible damage. Also functions as a nucleotide deglycase able to repair glycated guanine in the free nucleotide pool (GTP, GDP, GMP, dGTP) and in DNA and RNA. Is thus involved in a major nucleotide repair system named guanine glycation repair (GG repair), dedicated to reversing methylglyoxal and glyoxal damage via nucleotide sanitization and direct nucleic acid repair. Protects histones from adduction by methylglyoxal, controls the levels of methylglyoxal-derived argininine modifications on chromatin. Able to remove the glycations and restore histone 3, histone glycation disrupts both local and global chromatin architecture by altering histone-DNA interactions as well as histone acetylation and ubiquitination levels. Displays a very low glyoxalase activity that may reflect its deglycase activity. Eliminates hydrogen peroxide and protects cells against hydrogen peroxide-induced cell death. Required for correct mitochondrial morphology and function as well as for autophagy of dysfunctional mitochondria. Plays a role in regulating expression or stability of the mitochondrial uncoupling proteins SLC25A14 and SLC25A27 in dopaminergic neurons of the substantia nigra pars compacta and attenuates the oxidative stress induced by calcium entry into the neurons via L-type channels during pacemaking. Regulates astrocyte inflammatory responses, may modulate lipid rafts-dependent endocytosis in astrocytes and neuronal cells. In pancreatic islets, involved in the maintenance of mitochondrial reactive oxygen species (ROS) levels and glucose homeostasis in an age- and diet dependent manner. Protects pancreatic beta cells from cell death induced by inflammatory and cytotoxic setting. Binds to a number of mRNAs containing multiple copies of GG or CC motifs and partially inhibits their translation but dissociates following oxidative stress. Metal-binding protein able to bind copper as well as toxic mercury ions, enhances the cell protection mechanism against induced metal toxicity. In macrophages, interacts with the NADPH oxidase subunit NCF1 to direct NADPH oxidase-dependent ROS production, and protects against sepsis. This Mesocricetus auratus (Golden hamster) protein is Parkinson disease protein 7 homolog (PARK7).